Here is a 316-residue protein sequence, read N- to C-terminus: MSKRKVAIIGSGNIGTDLMIKILRHGQHLEMAVMVGIDPQSDGLARARRMGVATTHEGVIGLMNMPEFADIDIVFDATSAGAHVKNDAALREAKPDIRLIDLTPAAIGPYCVPVVNLEENVDQLNVNMVTCGGQATIPMVAAVSRVARVHYAEIIASIASKSAGPGTRANIDEFTETTSRAIEVVGGAAKGKAIIVLNPAEPPLMMRDTVYVLSDEASQDDIEASINEMAEAVQAYVPGYRLKQRVQFEVIPQDKPVNLPGVGQFSGLKTAVWLEVEGAAHYLSAYAGNLDIMTSSALATAEKMAQSLARKAGEAA.

Position 11–14 (11–14) interacts with NAD(+); sequence SGNI. Catalysis depends on Cys-131, which acts as the Acyl-thioester intermediate. Residues 162-170 and Asn-289 contribute to the NAD(+) site; that span reads SAGPGTRAN.

This sequence belongs to the acetaldehyde dehydrogenase family. As to quaternary structure, interacts with MhpE.

It carries out the reaction acetaldehyde + NAD(+) + CoA = acetyl-CoA + NADH + H(+). It functions in the pathway aromatic compound metabolism; 3-phenylpropanoate degradation. In terms of biological role, catalyzes the conversion of acetaldehyde to acetyl-CoA, using NAD(+) and coenzyme A. Is the final enzyme in the meta-cleavage pathway for the degradation of aromatic compounds. In Escherichia coli O81 (strain ED1a), this protein is Acetaldehyde dehydrogenase.